A 158-amino-acid polypeptide reads, in one-letter code: NAD(P)H-quinone oxidoreductase subunit J, chloroplastic (158 aa).

It belongs to the complex I 30 kDa subunit family. In terms of assembly, NDH is composed of at least 16 different subunits, 5 of which are encoded in the nucleus.

It is found in the plastid. Its subcellular location is the chloroplast thylakoid membrane. It catalyses the reaction a plastoquinone + NADH + (n+1) H(+)(in) = a plastoquinol + NAD(+) + n H(+)(out). The enzyme catalyses a plastoquinone + NADPH + (n+1) H(+)(in) = a plastoquinol + NADP(+) + n H(+)(out). NDH shuttles electrons from NAD(P)H:plastoquinone, via FMN and iron-sulfur (Fe-S) centers, to quinones in the photosynthetic chain and possibly in a chloroplast respiratory chain. The immediate electron acceptor for the enzyme in this species is believed to be plastoquinone. Couples the redox reaction to proton translocation, and thus conserves the redox energy in a proton gradient. The polypeptide is NAD(P)H-quinone oxidoreductase subunit J, chloroplastic (Angiopteris evecta (Mule's foot fern)).